A 314-amino-acid polypeptide reads, in one-letter code: 2,3,4,5-tetrahydropyridine-2,6-dicarboxylate N-succinyltransferase (314 aa).

Asp-163 and Glu-180 together coordinate Mg(2+). The Acyl-anhydride intermediate role is filled by Glu-196. Residues Arg-198, Gly-213, Ser-216, Ala-239, 254–255 (EA), Gly-262, Lys-274, and 287–290 (RRNS) contribute to the succinyl-CoA site.

This sequence belongs to the type 2 tetrahydrodipicolinate N-succinyltransferase family. Homotrimer.

The protein localises to the cytoplasm. It carries out the reaction (S)-2,3,4,5-tetrahydrodipicolinate + succinyl-CoA + H2O = (S)-2-succinylamino-6-oxoheptanedioate + CoA. It functions in the pathway amino-acid biosynthesis; L-lysine biosynthesis via DAP pathway; LL-2,6-diaminopimelate from (S)-tetrahydrodipicolinate (succinylase route): step 1/3. Functionally, catalyzes the conversion of the cyclic tetrahydrodipicolinate (THDP) into the acyclic N-succinyl-L-2-amino-6-oxopimelate using succinyl-CoA. The chain is 2,3,4,5-tetrahydropyridine-2,6-dicarboxylate N-succinyltransferase from Mycolicibacterium smegmatis (strain ATCC 700084 / mc(2)155) (Mycobacterium smegmatis).